Consider the following 134-residue polypeptide: Profilin-2 (134 aa).

A disulfide bridge links cysteine 13 with cysteine 118. The Involved in PIP2 interaction signature appears at 84–100 (AVIRGKKGSGGITIKKT). Threonine 114 is modified (phosphothreonine).

Belongs to the profilin family. As to quaternary structure, occurs in many kinds of cells as a complex with monomeric actin in a 1:1 ratio. Phosphorylated by MAP kinases.

It localises to the cytoplasm. Its subcellular location is the cytoskeleton. Binds to actin and affects the structure of the cytoskeleton. At high concentrations, profilin prevents the polymerization of actin, whereas it enhances it at low concentrations. In Olea europaea (Common olive), this protein is Profilin-2.